The primary structure comprises 95 residues: DNA/RNA-binding protein Alba (95 aa).

Lys-13 carries the N6-acetyllysine modification.

This sequence belongs to the histone-like Alba family. Post-translationally, acetylated. Acetylation at Lys-13 decreases DNA-binding affinity.

Its subcellular location is the cytoplasm. The protein resides in the chromosome. Binds double-stranded DNA tightly but without sequence specificity. Involved in DNA compaction. The chain is DNA/RNA-binding protein Alba from Nitrosopumilus maritimus (strain SCM1).